The chain runs to 138 residues: Vesicle transport protein GOT1B (138 aa).

Methionine 1 bears the N-acetylmethionine mark. Residues 1 to 9 lie on the Cytoplasmic side of the membrane; the sequence is MISLTDTQK. A helical membrane pass occupies residues 10 to 30; the sequence is IGMGLTGFGVFFLFFGMILFF. Residues 31 to 32 lie on the Lumenal side of the membrane; that stretch reads DK. The helical transmembrane segment at 33 to 53 threads the bilayer; that stretch reads ALLAIGNVLFVAGLAFVIGLE. Residues 54-68 are Cytoplasmic-facing; that stretch reads RTFRFFFQRHKVKAT. Residue glutamate 90 is a topological domain, lumenal. The chain crosses the membrane as a helical span at residues 91–109; it reads IYGFFLLFRGFFPVVVGFI. Residues 110–138 are Cytoplasmic-facing; that stretch reads RRVPVLGSLLNLPGIRSFVDKVGESNNMV.

Belongs to the GOT1 family.

Its subcellular location is the golgi apparatus membrane. In terms of biological role, may be involved in fusion of ER-derived transport vesicles with the Golgi complex. This chain is Vesicle transport protein GOT1B (Golt1b), found in Mus musculus (Mouse).